The chain runs to 398 residues: Acetate kinase (398 aa).

N7 lines the Mg(2+) pocket. An ATP-binding site is contributed by K14. Residue R85 coordinates substrate. D142 acts as the Proton donor/acceptor in catalysis. ATP contacts are provided by residues 202-206, 277-279, and 325-329; these read HLGNG, DMR, and GIGEN. E379 contributes to the Mg(2+) binding site.

It belongs to the acetokinase family. As to quaternary structure, homodimer. The cofactor is Mg(2+). Requires Mn(2+) as cofactor.

Its subcellular location is the cytoplasm. It catalyses the reaction acetate + ATP = acetyl phosphate + ADP. The protein operates within metabolic intermediate biosynthesis; acetyl-CoA biosynthesis; acetyl-CoA from acetate: step 1/2. Functionally, catalyzes the formation of acetyl phosphate from acetate and ATP. Can also catalyze the reverse reaction. This is Acetate kinase from Deinococcus radiodurans (strain ATCC 13939 / DSM 20539 / JCM 16871 / CCUG 27074 / LMG 4051 / NBRC 15346 / NCIMB 9279 / VKM B-1422 / R1).